A 372-amino-acid polypeptide reads, in one-letter code: Chaperone protein DnaJ (372 aa).

Positions 5–70 constitute a J domain; it reads DYYDLLEVSR…EKRAGYDRYG (66 aa). The segment at 134-212 adopts a CR-type zinc-finger fold; that stretch reads GIQAPIHYVT…CGGSGRKRDE (79 aa). Cys147, Cys150, Cys164, Cys167, Cys186, Cys189, Cys200, and Cys203 together coordinate Zn(2+). 4 CXXCXGXG motif repeats span residues 147 to 154, 164 to 171, 186 to 193, and 200 to 207; these read CNTCQGTG, CNTCQGSG, CTTCYGEG, and CKKCGGSG.

The protein belongs to the DnaJ family. Homodimer. Requires Zn(2+) as cofactor.

It localises to the cytoplasm. Participates actively in the response to hyperosmotic and heat shock by preventing the aggregation of stress-denatured proteins and by disaggregating proteins, also in an autonomous, DnaK-independent fashion. Unfolded proteins bind initially to DnaJ; upon interaction with the DnaJ-bound protein, DnaK hydrolyzes its bound ATP, resulting in the formation of a stable complex. GrpE releases ADP from DnaK; ATP binding to DnaK triggers the release of the substrate protein, thus completing the reaction cycle. Several rounds of ATP-dependent interactions between DnaJ, DnaK and GrpE are required for fully efficient folding. Also involved, together with DnaK and GrpE, in the DNA replication of plasmids through activation of initiation proteins. This chain is Chaperone protein DnaJ, found in Wolbachia pipientis subsp. Culex pipiens (strain wPip).